A 121-amino-acid chain; its full sequence is Large ribosomal subunit protein uL14 (121 aa).

It belongs to the universal ribosomal protein uL14 family. As to quaternary structure, part of the 50S ribosomal subunit. Forms a cluster with proteins L3 and L19. In the 70S ribosome, L14 and L19 interact and together make contacts with the 16S rRNA in bridges B5 and B8.

In terms of biological role, binds to 23S rRNA. Forms part of two intersubunit bridges in the 70S ribosome. In Parabacteroides distasonis (strain ATCC 8503 / DSM 20701 / CIP 104284 / JCM 5825 / NCTC 11152), this protein is Large ribosomal subunit protein uL14.